The primary structure comprises 402 residues: Acetate kinase (402 aa).

Asparagine 13 lines the Mg(2+) pocket. An ATP-binding site is contributed by lysine 20. Arginine 94 contributes to the substrate binding site. The active-site Proton donor/acceptor is the aspartate 151. Residues 211–215 (HLGNG), 285–287 (DFR), and 333–337 (GVGEN) contribute to the ATP site. Glutamate 387 serves as a coordination point for Mg(2+).

This sequence belongs to the acetokinase family. In terms of assembly, homodimer. It depends on Mg(2+) as a cofactor. Mn(2+) is required as a cofactor.

The protein localises to the cytoplasm. The enzyme catalyses acetate + ATP = acetyl phosphate + ADP. It participates in metabolic intermediate biosynthesis; acetyl-CoA biosynthesis; acetyl-CoA from acetate: step 1/2. In terms of biological role, catalyzes the formation of acetyl phosphate from acetate and ATP. Can also catalyze the reverse reaction. The chain is Acetate kinase from Nocardia farcinica (strain IFM 10152).